The chain runs to 331 residues: F-box protein At2g26160 (331 aa).

Residues 4-52 (PEWSELPGDLINLTANRFSSISDVLRVRSICKPWRSAAATPKSFQCNLP) form the F-box domain.

This Arabidopsis thaliana (Mouse-ear cress) protein is F-box protein At2g26160.